Consider the following 168-residue polypeptide: MERFIENLMYTSRWLLAPVYLGLSLGLLALAIKFFQEVFHVLPNIFDIAEADLVLVLLSLIDMTLVGGLLVMVMLSGYENFVSALDITDGREKLNWLGKMDSGSLKNKVAASIVAISSIHLLRVFMDARNIPDNKLMWYVIIHLTFVLSALVMGYLDRMSRYEKSKAA.

3 helical membrane passes run 15-35 (LLAPVYLGLSLGLLALAIKFF), 53-73 (LVLVLLSLIDMTLVGGLLVMV), and 136-156 (LMWYVIIHLTFVLSALVMGYL).

Belongs to the UPF0114 family.

The protein localises to the cell membrane. The chain is UPF0114 protein PC1_0431 from Pectobacterium carotovorum subsp. carotovorum (strain PC1).